Consider the following 500-residue polypeptide: Kynurenine 3-monooxygenase acdD (500 aa).

Residues Val17 and 36 to 38 (ELR) each bind FAD. Asn50 carries N-linked (GlcNAc...) asparagine glycosylation. Ala58 serves as a coordination point for FAD. Residues Arg89 and Tyr106 each contribute to the L-kynurenine site. FAD-binding residues include Arg118 and Leu143. An N-linked (GlcNAc...) asparagine glycan is attached at Asn163. Residues Asp321 and 332 to 335 (QGLN) contribute to the FAD site. Asn392 and Tyr428 together coordinate L-kynurenine. The chain crosses the membrane as a helical span at residues 451-471 (LLLYGSISAIISSAAIVGVLA).

This sequence belongs to the aromatic-ring hydroxylase family. KMO subfamily. It depends on FAD as a cofactor.

It is found in the mitochondrion outer membrane. It catalyses the reaction L-kynurenine + NADPH + O2 + H(+) = 3-hydroxy-L-kynurenine + NADP(+) + H2O. It participates in secondary metabolite biosynthesis. The protein operates within cofactor biosynthesis; NAD(+) biosynthesis; quinolinate from L-kynurenine: step 1/3. Functionally, indoleamine 2,3-dioxygenase; part of the gene cluster that mediates the biosynthesis of aspcandine, a pyrrolobenzazepine alkaloid. Initially, the indoleamine 2,3-dioxygenase acdA accepts L-tryptophan and performs the oxidative opening of the indole ring to yield N'-formyl-L-kynurenine, which undergoes the spontaneous deformylation reaction to provide L-kynurenine. The kynurenine 3-monooxygenase acdD then hydroxylates L-kynurenine to afford 3-hydroxy-L-kynurenine. 3-hydroxy-L-kynurenine is activated by the A domain of the NRPS-PKS acdB and subsequently loaded onto the enzyme. The KS domain conducts the decarboxylative condensation of the 3-hydroxy-L-kynurenyl and malonyl moieties, and subsequent nucleophilic attacks by the two amino groups would occur nonenzymatically at two distinct positions, achieving the chain release and the construction of the tricyclic system. Finally, the dehydration reaction completes the biosynthesis to yield aspcandine. The polypeptide is Kynurenine 3-monooxygenase acdD (Aspergillus candidus).